We begin with the raw amino-acid sequence, 349 residues long: DNA polymerase IV (349 aa).

One can recognise a UmuC domain in the interval 7–188 (IIHIDMDYFF…LPVKKLFGVG (182 aa)). Mg(2+) contacts are provided by Asp-11 and Asp-106. Glu-107 is a catalytic residue.

Belongs to the DNA polymerase type-Y family. In terms of assembly, monomer. Mg(2+) is required as a cofactor.

The protein localises to the cytoplasm. It carries out the reaction DNA(n) + a 2'-deoxyribonucleoside 5'-triphosphate = DNA(n+1) + diphosphate. In terms of biological role, poorly processive, error-prone DNA polymerase involved in untargeted mutagenesis. Copies undamaged DNA at stalled replication forks, which arise in vivo from mismatched or misaligned primer ends. These misaligned primers can be extended by PolIV. Exhibits no 3'-5' exonuclease (proofreading) activity. May be involved in translesional synthesis, in conjunction with the beta clamp from PolIII. This is DNA polymerase IV from Francisella tularensis subsp. holarctica (strain FTNF002-00 / FTA).